Consider the following 344-residue polypeptide: tRNA N6-adenosine threonylcarbamoyltransferase (344 aa).

Fe cation-binding residues include H113 and H117. Substrate is bound by residues 135–139 (LVSGG), D169, G182, D186, and N278. D306 is a binding site for Fe cation. The interval 325 to 344 (ESPISVGTDPSLSVETPQVF) is disordered. Positions 326-344 (SPISVGTDPSLSVETPQVF) are enriched in polar residues.

It belongs to the KAE1 / TsaD family. The cofactor is Fe(2+).

The protein localises to the cytoplasm. It carries out the reaction L-threonylcarbamoyladenylate + adenosine(37) in tRNA = N(6)-L-threonylcarbamoyladenosine(37) in tRNA + AMP + H(+). Its function is as follows. Required for the formation of a threonylcarbamoyl group on adenosine at position 37 (t(6)A37) in tRNAs that read codons beginning with adenine. Is involved in the transfer of the threonylcarbamoyl moiety of threonylcarbamoyl-AMP (TC-AMP) to the N6 group of A37, together with TsaE and TsaB. TsaD likely plays a direct catalytic role in this reaction. This is tRNA N6-adenosine threonylcarbamoyltransferase from Corynebacterium glutamicum (strain R).